Consider the following 429-residue polypeptide: Gamma-glutamyl phosphate reductase (429 aa).

This sequence belongs to the gamma-glutamyl phosphate reductase family.

It is found in the cytoplasm. The enzyme catalyses L-glutamate 5-semialdehyde + phosphate + NADP(+) = L-glutamyl 5-phosphate + NADPH + H(+). It functions in the pathway amino-acid biosynthesis; L-proline biosynthesis; L-glutamate 5-semialdehyde from L-glutamate: step 2/2. Functionally, catalyzes the NADPH-dependent reduction of L-glutamate 5-phosphate into L-glutamate 5-semialdehyde and phosphate. The product spontaneously undergoes cyclization to form 1-pyrroline-5-carboxylate. This is Gamma-glutamyl phosphate reductase from Sphingopyxis alaskensis (strain DSM 13593 / LMG 18877 / RB2256) (Sphingomonas alaskensis).